An 87-amino-acid chain; its full sequence is Retinal rod rhodopsin-sensitive cGMP 3',5'-cyclic phosphodiesterase subunit gamma (87 aa).

Position 1 is an N-acetylmethionine (Met1). The tract at residues 16–54 (VVGGPVTPRKGPPKFKQRQTRQFKSKPPKKGVQGFGDDI) is disordered. Positions 26–44 (GPPKFKQRQTRQFKSKPPK) are enriched in basic residues.

It belongs to the rod/cone cGMP-PDE gamma subunit family. In terms of assembly, oligomer composed of two catalytic chains (alpha and beta), an inhibitory chain (gamma) and the delta chain.

It catalyses the reaction 3',5'-cyclic GMP + H2O = GMP + H(+). Functionally, participates in processes of transmission and amplification of the visual signal. cGMP-PDEs are the effector molecules in G-protein-mediated phototransduction in vertebrate rods and cones. The sequence is that of Retinal rod rhodopsin-sensitive cGMP 3',5'-cyclic phosphodiesterase subunit gamma (PDE6G) from Cavia porcellus (Guinea pig).